The following is a 337-amino-acid chain: Vacuolar protein sorting-associated protein 26B-B (337 aa).

Residues 313 to 337 (RFEGTSHPETRPQHSGAAALEQEHE) are disordered.

It belongs to the VPS26 family. In terms of assembly, component of the heterotrimeric retromer cargo-selective complex (CSC) which is believed to associate with variable sorting nexins to form functionally distinct retromer complex variants.

The protein resides in the cytoplasm. It localises to the membrane. The protein localises to the endosome. Acts as a component of the retromer cargo-selective complex (CSC). The CSC is believed to be the core functional component of retromer or respective retromer complex variants acting to prevent missorting of selected transmembrane cargo proteins into the lysosomal degradation pathway. Retromer mediates retrograde transport of cargo proteins from endosomes to the trans-Golgi network (TGN). The chain is Vacuolar protein sorting-associated protein 26B-B (vps26b-b) from Xenopus laevis (African clawed frog).